We begin with the raw amino-acid sequence, 328 residues long: Hairy/enhancer-of-split related with YRPW motif-like protein (328 aa).

A disordered region spans residues 1-54 (MKRPREPSGSDSESDGPIDVGREGELSQMARPLSTPSPSQMQARKKRRGIIEKR). The segment at 42–111 (QARKKRRGII…GGTGFFDARA (70 aa)) is transcriptional repression and interaction with NCOR1 and SIN3A. One can recognise a bHLH domain in the interval 43 to 98 (ARKKRRGIIEKRRRDRINSSLSELRRLVPTAFEKQGSSKLEKAEVLQMTVDHLKML). The Orange domain occupies 116 to 153 (FRSIGFRECLTEVIRYLGVLEGPSSRADPVRIRLLSHL). Residues 236 to 272 (LLPSRGASSTRRARPLERPAAPLPAAPSGRATRGSHM) form a disordered region.

It belongs to the HEY family. Self-associates. Interacts with GATA4, GATA6, HES1, HEY1 and HEY2. Interacts with HDAC1, NCOR1 and SIN3A.

The protein localises to the nucleus. In terms of biological role, downstream effector of Notch signaling which may be required for cardiovascular development. Transcriptional repressor which binds preferentially to the canonical E box sequence 5'-CACGTG-3'. Represses transcription by the cardiac transcriptional activators GATA4 and GATA6. The chain is Hairy/enhancer-of-split related with YRPW motif-like protein (HEYL) from Bos taurus (Bovine).